We begin with the raw amino-acid sequence, 151 residues long: 3-dehydroquinate dehydratase (151 aa).

Y24 acts as the Proton acceptor in catalysis. Substrate contacts are provided by N76, H82, and D89. The Proton donor role is filled by H102. Residues 103 to 104 (VS) and R113 contribute to the substrate site.

It belongs to the type-II 3-dehydroquinase family. As to quaternary structure, homododecamer.

The catalysed reaction is 3-dehydroquinate = 3-dehydroshikimate + H2O. Its pathway is metabolic intermediate biosynthesis; chorismate biosynthesis; chorismate from D-erythrose 4-phosphate and phosphoenolpyruvate: step 3/7. Its function is as follows. Catalyzes a trans-dehydration via an enolate intermediate. The polypeptide is 3-dehydroquinate dehydratase (Afipia carboxidovorans (strain ATCC 49405 / DSM 1227 / KCTC 32145 / OM5) (Oligotropha carboxidovorans)).